Reading from the N-terminus, the 473-residue chain is Phosphatidylserine synthase 1 (473 aa).

N-acetylalanine is present on alanine 2. Topologically, residues 2-35 are cytoplasmic; it reads ASCVGSRTLSKDDVNYRMHFRMINEQQVEDITID. Residues 36–56 form a helical membrane-spanning segment; the sequence is FFYRPHTITLLSFTIISLMYF. Residues 57–72 lie on the Lumenal side of the membrane; sequence AFTRDDSVPEDNIWRG. A helical membrane pass occupies residues 73 to 93; sequence ILSVIFFFLIISVLAFPNGPF. Residues 94–102 lie on the Cytoplasmic side of the membrane; it reads TRPHPALWR. Residues 103–123 form a helical membrane-spanning segment; that stretch reads MVFGLSVLYFLFLVFLLFLNF. The Lumenal segment spans residues 124–186; that stretch reads EQVKSLMYWL…AMKALLIRSY (63 aa). A helical membrane pass occupies residues 187–207; it reads GLCWTISITWELTELFFMHLL. Over 208–216 the chain is Cytoplasmic; it reads PNFAECWWD. The helical transmembrane segment at 217 to 237 threads the bilayer; that stretch reads QVILDILLCNGGGIWLGMVVC. Topologically, residues 238-286 are lumenal; the sequence is RFLEMRTYHWASFKDIHTTTGKIKRAVLQFTPASWTYVRWFDPKSSFQR. The chain crosses the membrane as a helical span at residues 287–307; the sequence is VAGIYLFMIIWQLTELNTFFL. Over 308–319 the chain is Cytoplasmic; sequence KHIFVFQASHPL. Residues 320–342 form a helical membrane-spanning segment; it reads SWGRILFIGCITAPTVRQYYAYL. The Lumenal segment spans residues 343–355; that stretch reads TDTQCKRVGTQCW. Residues 356-376 form a helical membrane-spanning segment; the sequence is VFGVIGFLEAIVCIKFGQDLF. At 377 to 383 the chain is on the cytoplasmic side; the sequence is SKTQILY. A helical membrane pass occupies residues 384–404; it reads VMLWLLCVAFTTFLCLYGMVW. Topologically, residues 405–473 are lumenal; the sequence is YAEHYGHREK…SKVTNGVGKK (69 aa). Phosphoserine is present on residues serine 417, serine 425, serine 442, and serine 454. The interval 428–473 is disordered; it reads ISWHHGKGSKGSEDSPPKHSSNHESHSSRRRNRHSKSKVTNGVGKK. A compositionally biased stretch (basic and acidic residues) spans 437 to 454; the sequence is KGSEDSPPKHSSNHESHS. Basic residues predominate over residues 455-464; that stretch reads SRRRNRHSKS.

The protein belongs to the phosphatidyl serine synthase family. Expressed in kidney, testis, lung, skeletal muscle, liver brain, heart and spleen with highest expression in testis, liver, heart and brain.

It is found in the endoplasmic reticulum membrane. The enzyme catalyses a 1,2-diacyl-sn-glycero-3-phosphoethanolamine + L-serine = a 1,2-diacyl-sn-glycero-3-phospho-L-serine + ethanolamine. The catalysed reaction is a 1,2-diacyl-sn-glycero-3-phosphocholine + L-serine = a 1,2-diacyl-sn-glycero-3-phospho-L-serine + choline. Its pathway is phospholipid metabolism; phosphatidylserine biosynthesis. Potently inhibited by choline in the mitochondria-associated membrane (MAM). Very little inhibition by choline in the endoplasmic reticulum (ER) per se. Functionally, catalyzes a base-exchange reaction in which the polar head group of phosphatidylethanolamine (PE) or phosphatidylcholine (PC) is replaced by L-serine. Catalyzes mainly the conversion of phosphatidylcholine. Also converts, in vitro and to a lesser extent, phosphatidylethanolamine. In Mus musculus (Mouse), this protein is Phosphatidylserine synthase 1 (Ptdss1).